The following is a 233-amino-acid chain: MSSDIQQIRIGLTNNHPCSYLADRMERVAVAIDPQMQTPETYEVLMANGFRRSGDTIYKPHCDHCQSCQALRIPAPDFVPSKSQKRLLKLLSQEFHWQLKPELDEDWYTLYARYIFARHRHGSMYPPNKMEFAKFARAKWLNTQYLHLYQGEKLVAIAVTDLLPNSASAFYTFYDPDISISLGTLAVLCQLNYCQQTKKQWLYLGYQIDECPAMNYKVRFNPHQRLVNQRWRG.

It belongs to the R-transferase family. Bpt subfamily.

It localises to the cytoplasm. The enzyme catalyses N-terminal L-glutamyl-[protein] + L-leucyl-tRNA(Leu) = N-terminal L-leucyl-L-glutamyl-[protein] + tRNA(Leu) + H(+). It carries out the reaction N-terminal L-aspartyl-[protein] + L-leucyl-tRNA(Leu) = N-terminal L-leucyl-L-aspartyl-[protein] + tRNA(Leu) + H(+). Functions in the N-end rule pathway of protein degradation where it conjugates Leu from its aminoacyl-tRNA to the N-termini of proteins containing an N-terminal aspartate or glutamate. The protein is Aspartate/glutamate leucyltransferase of Vibrio cholerae serotype O1 (strain ATCC 39315 / El Tor Inaba N16961).